The following is a 293-amino-acid chain: Digeranylgeranylglyceryl phosphate synthase (293 aa).

7 helical membrane passes run Leu-26 to Leu-46, Leu-50 to Phe-70, Phe-107 to Leu-127, Phe-140 to Ile-160, Ile-215 to Pro-235, Phe-237 to Val-257, and Tyr-273 to Phe-293.

This sequence belongs to the UbiA prenyltransferase family. DGGGP synthase subfamily. It depends on Mg(2+) as a cofactor.

Its subcellular location is the cell membrane. The catalysed reaction is sn-3-O-(geranylgeranyl)glycerol 1-phosphate + (2E,6E,10E)-geranylgeranyl diphosphate = 2,3-bis-O-(geranylgeranyl)-sn-glycerol 1-phosphate + diphosphate. Its pathway is membrane lipid metabolism; glycerophospholipid metabolism. Functionally, prenyltransferase that catalyzes the transfer of the geranylgeranyl moiety of geranylgeranyl diphosphate (GGPP) to the C2 hydroxyl of (S)-3-O-geranylgeranylglyceryl phosphate (GGGP). This reaction is the second ether-bond-formation step in the biosynthesis of archaeal membrane lipids. This Archaeoglobus fulgidus (strain ATCC 49558 / DSM 4304 / JCM 9628 / NBRC 100126 / VC-16) protein is Digeranylgeranylglyceryl phosphate synthase.